Here is a 91-residue protein sequence, read N- to C-terminus: UPF0250 protein Pfl01_4965 (91 aa).

It belongs to the UPF0250 family.

The polypeptide is UPF0250 protein Pfl01_4965 (Pseudomonas fluorescens (strain Pf0-1)).